The primary structure comprises 176 residues: 3-hydroxyanthranilate 3,4-dioxygenase (176 aa).

Arg44 is an O2 binding site. 3 residues coordinate Fe cation: His48, Glu54, and His92. Glu54 is a binding site for substrate. Residues Arg96 and Glu106 each coordinate substrate. Cys121, Cys124, Cys158, and Cys161 together coordinate Fe cation.

The protein belongs to the 3-HAO family. As to quaternary structure, homodimer. Fe(2+) serves as cofactor.

It catalyses the reaction 3-hydroxyanthranilate + O2 = (2Z,4Z)-2-amino-3-carboxymuconate 6-semialdehyde. The protein operates within cofactor biosynthesis; NAD(+) biosynthesis; quinolinate from L-kynurenine: step 3/3. Catalyzes the oxidative ring opening of 3-hydroxyanthranilate to 2-amino-3-carboxymuconate semialdehyde, which spontaneously cyclizes to quinolinate. The polypeptide is 3-hydroxyanthranilate 3,4-dioxygenase (Xanthomonas oryzae pv. oryzae (strain MAFF 311018)).